Reading from the N-terminus, the 284-residue chain is Homeobox protein CDX-4 (284 aa).

Disordered stretches follow at residues 15–40 and 120–155; these read PGTL…SPMP and GGGT…SRHS. Over residues 22–37 the composition is skewed to gly residues; sequence GGDGTAGTGGTGGGGS. The homeobox DNA-binding region spans 173 to 232; it reads KEKYRVVYTDHQRLELEKEFHCNRYITIQRKSELAVNLGLSERQVKIWFQNRRAKERKMI. Residues 238–253 show a composition bias toward polar residues; that stretch reads QFENSGGSVQSDSDSI. The interval 238 to 259 is disordered; the sequence is QFENSGGSVQSDSDSISPGELP.

It belongs to the Caudal homeobox family.

The protein resides in the nucleus. This chain is Homeobox protein CDX-4 (CDX4), found in Homo sapiens (Human).